Reading from the N-terminus, the 227-residue chain is UPF0659 protein YMR090W (227 aa).

Belongs to the UPF0659 family.

It is found in the cytoplasm. In Saccharomyces cerevisiae (strain ATCC 204508 / S288c) (Baker's yeast), this protein is UPF0659 protein YMR090W.